We begin with the raw amino-acid sequence, 137 residues long: Phosphoribosyl-AMP cyclohydrolase (137 aa).

Asp84 is a binding site for Mg(2+). Cys85 contacts Zn(2+). Asp86 and Asp88 together coordinate Mg(2+). Zn(2+)-binding residues include Cys101 and Cys108.

The protein belongs to the PRA-CH family. As to quaternary structure, homodimer. It depends on Mg(2+) as a cofactor. Zn(2+) is required as a cofactor.

The protein localises to the cytoplasm. The catalysed reaction is 1-(5-phospho-beta-D-ribosyl)-5'-AMP + H2O = 1-(5-phospho-beta-D-ribosyl)-5-[(5-phospho-beta-D-ribosylamino)methylideneamino]imidazole-4-carboxamide. It functions in the pathway amino-acid biosynthesis; L-histidine biosynthesis; L-histidine from 5-phospho-alpha-D-ribose 1-diphosphate: step 3/9. In terms of biological role, catalyzes the hydrolysis of the adenine ring of phosphoribosyl-AMP. In Pelodictyon phaeoclathratiforme (strain DSM 5477 / BU-1), this protein is Phosphoribosyl-AMP cyclohydrolase.